Reading from the N-terminus, the 109-residue chain is Flagellar transcriptional regulator FlhD (109 aa).

Belongs to the FlhD family. In terms of assembly, homodimer; disulfide-linked. Forms a heterohexamer composed of two FlhC and four FlhD subunits. Each FlhC binds a FlhD dimer, forming a heterotrimer, and a hexamer assembles by dimerization of two heterotrimers.

The protein localises to the cytoplasm. Functions in complex with FlhC as a master transcriptional regulator that regulates transcription of several flagellar and non-flagellar operons by binding to their promoter region. Activates expression of class 2 flagellar genes, including fliA, which is a flagellum-specific sigma factor that turns on the class 3 genes. Also regulates genes whose products function in a variety of physiological pathways. The sequence is that of Flagellar transcriptional regulator FlhD from Acidovorax sp. (strain JS42).